Consider the following 201-residue polypeptide: Ribonuclease HII (201 aa).

Positions 14–201 (NLIAGVDEVG…KPVKRILGIE (188 aa)) constitute an RNase H type-2 domain. The a divalent metal cation site is built by Asp-20, Glu-21, and Asp-112.

This sequence belongs to the RNase HII family. The cofactor is Mn(2+). Mg(2+) serves as cofactor.

It is found in the cytoplasm. It carries out the reaction Endonucleolytic cleavage to 5'-phosphomonoester.. Endonuclease that specifically degrades the RNA of RNA-DNA hybrids. This chain is Ribonuclease HII, found in Photobacterium profundum (strain SS9).